The chain runs to 275 residues: Ribosomal RNA small subunit methyltransferase A (275 aa).

6 residues coordinate S-adenosyl-L-methionine: Asn-19, Leu-21, Gly-46, Glu-71, Asp-94, and Asn-117.

It belongs to the class I-like SAM-binding methyltransferase superfamily. rRNA adenine N(6)-methyltransferase family. RsmA subfamily.

Its subcellular location is the cytoplasm. The enzyme catalyses adenosine(1518)/adenosine(1519) in 16S rRNA + 4 S-adenosyl-L-methionine = N(6)-dimethyladenosine(1518)/N(6)-dimethyladenosine(1519) in 16S rRNA + 4 S-adenosyl-L-homocysteine + 4 H(+). In terms of biological role, specifically dimethylates two adjacent adenosines (A1518 and A1519) in the loop of a conserved hairpin near the 3'-end of 16S rRNA in the 30S particle. May play a critical role in biogenesis of 30S subunits. In Burkholderia pseudomallei (strain 668), this protein is Ribosomal RNA small subunit methyltransferase A.